A 307-amino-acid chain; its full sequence is Formate hydrogenlyase subunit 4 (307 aa).

At M1 to S2 the chain is on the periplasmic side. Residues V3 to I23 traverse the membrane as a helical segment. Topologically, residues T24–T67 are cytoplasmic. A helical membrane pass occupies residues P68 to G88. The Periplasmic segment spans residues S89–Q93. The chain crosses the membrane as a helical span at residues L94–S114. Residues G115–A131 lie on the Cytoplasmic side of the membrane. The helical transmembrane segment at M132–A152 threads the bilayer. At G153–W167 the chain is on the periplasmic side. The helical transmembrane segment at P168–I188 threads the bilayer. Over E189–K221 the chain is Cytoplasmic. Residues W222–W242 traverse the membrane as a helical segment. The Periplasmic segment spans residues G243–L253. Residues L254–F274 traverse the membrane as a helical segment. The Cytoplasmic segment spans residues E275 to D284. The chain crosses the membrane as a helical span at residues I285–L305. Topologically, residues A306–A307 are periplasmic.

The protein belongs to the complex I subunit 1 family. As to quaternary structure, FHL comprises of a formate dehydrogenase, unidentified electron carriers and a hydrogenase (isoenzyme 3). In this non-energy conserving pathway molecular hydrogen and carbodioxide from formate are released.

It localises to the cell inner membrane. This is Formate hydrogenlyase subunit 4 (hycD) from Escherichia coli (strain K12).